Consider the following 140-residue polypeptide: Small ribosomal subunit protein uS19 (140 aa).

The protein belongs to the universal ribosomal protein uS19 family.

Protein S19 forms a complex with S13 that binds strongly to the 16S ribosomal RNA. The chain is Small ribosomal subunit protein uS19 from Sulfolobus acidocaldarius (strain ATCC 33909 / DSM 639 / JCM 8929 / NBRC 15157 / NCIMB 11770).